The chain runs to 860 residues: Rod cGMP-specific 3',5'-cyclic phosphodiesterase subunit alpha (860 aa).

At G2 the chain carries N-acetylglycine. GAF domains lie at 73-222 (QTEK…NLIM) and 254-431 (DIER…GWSV). Positions 483-816 (EEEELAEILQ…KEWKALADEY (334 aa)) constitute a PDEase domain. The active-site Proton donor is H559. H563, H599, D600, and D720 together coordinate a divalent metal cation. The disordered stretch occupies residues 821–860 (KVQEEKKQKQQSAKSAAAGNQPGGNPSPGGATTSKSCCIQ). Positions 830–851 (QQSAKSAAAGNQPGGNPSPGGA) are enriched in low complexity. A Cysteine methyl ester modification is found at C857. Residue C857 is the site of S-farnesyl cysteine attachment. Residues 858-860 (CIQ) constitute a propeptide, removed in mature form.

This sequence belongs to the cyclic nucleotide phosphodiesterase family. As to quaternary structure, oligomer composed of two catalytic chains (alpha and beta), an inhibitory chain (gamma) and the delta chain. The cofactor is a divalent metal cation.

It is found in the cell membrane. Its subcellular location is the cell projection. The protein resides in the cilium. The protein localises to the photoreceptor outer segment. It catalyses the reaction 3',5'-cyclic GMP + H2O = GMP + H(+). Rod-specific cGMP phosphodiesterase that catalyzes the hydrolysis of 3',5'-cyclic GMP. This protein participates in processes of transmission and amplification of the visual signal. The chain is Rod cGMP-specific 3',5'-cyclic phosphodiesterase subunit alpha from Homo sapiens (Human).